Consider the following 283-residue polypeptide: Acetyl-coenzyme A carboxylase carboxyl transferase subunit beta (283 aa).

In terms of domain architecture, CoA carboxyltransferase N-terminal spans 29-283 (LWISCPKCQQ…VKIHSMKGAF (255 aa)). Zn(2+) is bound by residues cysteine 33, cysteine 36, cysteine 51, and cysteine 54. The segment at 33–54 (CPKCQQSIYHKDLGKYKTCPNC) adopts a C4-type zinc-finger fold.

It belongs to the AccD/PCCB family. Acetyl-CoA carboxylase is a heterohexamer composed of biotin carboxyl carrier protein (AccB), biotin carboxylase (AccC) and two subunits each of ACCase subunit alpha (AccA) and ACCase subunit beta (AccD). It depends on Zn(2+) as a cofactor.

Its subcellular location is the cytoplasm. It carries out the reaction N(6)-carboxybiotinyl-L-lysyl-[protein] + acetyl-CoA = N(6)-biotinyl-L-lysyl-[protein] + malonyl-CoA. It participates in lipid metabolism; malonyl-CoA biosynthesis; malonyl-CoA from acetyl-CoA: step 1/1. Component of the acetyl coenzyme A carboxylase (ACC) complex. Biotin carboxylase (BC) catalyzes the carboxylation of biotin on its carrier protein (BCCP) and then the CO(2) group is transferred by the transcarboxylase to acetyl-CoA to form malonyl-CoA. The polypeptide is Acetyl-coenzyme A carboxylase carboxyl transferase subunit beta (Ligilactobacillus salivarius (strain UCC118) (Lactobacillus salivarius)).